Consider the following 954-residue polypeptide: E3 ubiquitin-protein ligase MIB2 (954 aa).

In terms of domain architecture, MIB/HERC2 1 spans 1-80 (MDLDPYASMQ…AYDLLLYDNA (80 aa)). The segment at 86-138 (HPNIICDCCKKHGIRGMRWKCKMCFDYDLCTQCYMNNKHDLSHAFERYETAHS) adopts a ZZ-type zinc-finger fold. Positions 91, 94, 106, 109, 115, 118, 124, and 128 each coordinate Zn(2+). The 79-residue stretch at 149–227 (LTRITLKGTF…KVDLKCTVEA (79 aa)) folds into the MIB/HERC2 2 domain. ANK repeat units follow at residues 464–493 (QGRT…TVNL), 497–526 (EGDT…GADL), 530–559 (AKCT…DVNL), 563–591 (HGDT…NIDF), 597–626 (QGFN…QLVD), 631–661 (DGFT…DVNV), 665–694 (RNQT…DVNA), 698–726 (DGDT…EMGS), and 766–795 (RGKS…EQQV). RING-type zinc fingers lie at residues 830–865 (CLVC…IKCQ) and 910–943 (CPIC…PICR).

The protein resides in the cytoplasm. The catalysed reaction is S-ubiquitinyl-[E2 ubiquitin-conjugating enzyme]-L-cysteine + [acceptor protein]-L-lysine = [E2 ubiquitin-conjugating enzyme]-L-cysteine + N(6)-ubiquitinyl-[acceptor protein]-L-lysine.. Its pathway is protein modification; protein ubiquitination. E3 ubiquitin-protein ligase that mediates ubiquitination of Delta receptors, which act as ligands of Notch proteins. Positively regulates the Delta-mediated Notch signaling by ubiquitinating the intracellular domain of Delta, leading to endocytosis of Delta receptors. The polypeptide is E3 ubiquitin-protein ligase MIB2 (MIB2) (Gallus gallus (Chicken)).